We begin with the raw amino-acid sequence, 724 residues long: Pesticidal crystal protein Cry11Ba (724 aa).

It belongs to the delta endotoxin family.

Functionally, promotes colloidosmotic lysis by binding to the midgut epithelial cells of mosquitos. Active on Aedes aegypti, Culex pipiens and Anopheles stephensi larvae. This chain is Pesticidal crystal protein Cry11Ba (cry11Ba), found in Bacillus thuringiensis subsp. jegathesan.